Reading from the N-terminus, the 485-residue chain is Aspartyl/glutamyl-tRNA(Asn/Gln) amidotransferase subunit B (485 aa).

Belongs to the GatB/GatE family. GatB subfamily. In terms of assembly, heterotrimer of A, B and C subunits.

The enzyme catalyses L-glutamyl-tRNA(Gln) + L-glutamine + ATP + H2O = L-glutaminyl-tRNA(Gln) + L-glutamate + ADP + phosphate + H(+). It catalyses the reaction L-aspartyl-tRNA(Asn) + L-glutamine + ATP + H2O = L-asparaginyl-tRNA(Asn) + L-glutamate + ADP + phosphate + 2 H(+). In terms of biological role, allows the formation of correctly charged Asn-tRNA(Asn) or Gln-tRNA(Gln) through the transamidation of misacylated Asp-tRNA(Asn) or Glu-tRNA(Gln) in organisms which lack either or both of asparaginyl-tRNA or glutaminyl-tRNA synthetases. The reaction takes place in the presence of glutamine and ATP through an activated phospho-Asp-tRNA(Asn) or phospho-Glu-tRNA(Gln). The protein is Aspartyl/glutamyl-tRNA(Asn/Gln) amidotransferase subunit B of Methylacidiphilum infernorum (isolate V4) (Methylokorus infernorum (strain V4)).